Reading from the N-terminus, the 317-residue chain is Beta-ketoacyl-[acyl-carrier-protein] synthase III (317 aa).

Active-site residues include Cys-112 and His-244. Residues 245-249 (QANLR) form an ACP-binding region. Asn-274 is an active-site residue.

Belongs to the thiolase-like superfamily. FabH family. Homodimer.

It is found in the cytoplasm. It catalyses the reaction malonyl-[ACP] + acetyl-CoA + H(+) = 3-oxobutanoyl-[ACP] + CO2 + CoA. The protein operates within lipid metabolism; fatty acid biosynthesis. In terms of biological role, catalyzes the condensation reaction of fatty acid synthesis by the addition to an acyl acceptor of two carbons from malonyl-ACP. Catalyzes the first condensation reaction which initiates fatty acid synthesis and may therefore play a role in governing the total rate of fatty acid production. Possesses both acetoacetyl-ACP synthase and acetyl transacylase activities. Its substrate specificity determines the biosynthesis of branched-chain and/or straight-chain of fatty acids. This Enterobacter sp. (strain 638) protein is Beta-ketoacyl-[acyl-carrier-protein] synthase III.